A 98-amino-acid polypeptide reads, in one-letter code: Co-chaperonin GroES (98 aa).

It belongs to the GroES chaperonin family. Heptamer of 7 subunits arranged in a ring. Interacts with the chaperonin GroEL.

Its subcellular location is the cytoplasm. Together with the chaperonin GroEL, plays an essential role in assisting protein folding. The GroEL-GroES system forms a nano-cage that allows encapsulation of the non-native substrate proteins and provides a physical environment optimized to promote and accelerate protein folding. GroES binds to the apical surface of the GroEL ring, thereby capping the opening of the GroEL channel. The sequence is that of Co-chaperonin GroES from Agrobacterium fabrum (strain C58 / ATCC 33970) (Agrobacterium tumefaciens (strain C58)).